Consider the following 430-residue polypeptide: Enolase (430 aa).

Q167 is a (2R)-2-phosphoglycerate binding site. Catalysis depends on E209, which acts as the Proton donor. Residues D245, E286, and D313 each contribute to the Mg(2+) site. Residues K338, R367, S368, and K389 each contribute to the (2R)-2-phosphoglycerate site. K338 serves as the catalytic Proton acceptor.

The protein belongs to the enolase family. Requires Mg(2+) as cofactor.

The protein resides in the cytoplasm. It localises to the secreted. The protein localises to the cell surface. It catalyses the reaction (2R)-2-phosphoglycerate = phosphoenolpyruvate + H2O. The protein operates within carbohydrate degradation; glycolysis; pyruvate from D-glyceraldehyde 3-phosphate: step 4/5. Catalyzes the reversible conversion of 2-phosphoglycerate (2-PG) into phosphoenolpyruvate (PEP). It is essential for the degradation of carbohydrates via glycolysis. The protein is Enolase of Synechococcus sp. (strain WH7803).